The primary structure comprises 354 residues: Anthranilate phosphoribosyltransferase (354 aa).

Residues G94, G97–D98, T102, N104–T107, K122–S130, and S134 each bind 5-phospho-alpha-D-ribose 1-diphosphate. G94 is an anthranilate binding site. S106 contributes to the Mg(2+) binding site. Residue N125 coordinates anthranilate. R180 is a binding site for anthranilate. Residues D238 and E239 each contribute to the Mg(2+) site.

Belongs to the anthranilate phosphoribosyltransferase family. Homodimer. The cofactor is Mg(2+).

It catalyses the reaction N-(5-phospho-beta-D-ribosyl)anthranilate + diphosphate = 5-phospho-alpha-D-ribose 1-diphosphate + anthranilate. The protein operates within amino-acid biosynthesis; L-tryptophan biosynthesis; L-tryptophan from chorismate: step 2/5. Functionally, catalyzes the transfer of the phosphoribosyl group of 5-phosphorylribose-1-pyrophosphate (PRPP) to anthranilate to yield N-(5'-phosphoribosyl)-anthranilate (PRA). This chain is Anthranilate phosphoribosyltransferase, found in Streptomyces avermitilis (strain ATCC 31267 / DSM 46492 / JCM 5070 / NBRC 14893 / NCIMB 12804 / NRRL 8165 / MA-4680).